Consider the following 649-residue polypeptide: Exolysin (649 aa).

The chain crosses the membrane as a helical span at residues 37–57 (LIYTIIVLVVAAVVGLVIFIV). Residues 184–268 (KDIIDNKLRE…KKATDDFKKK (85 aa)) are a coiled coil. Positions 258–275 (AKKATDDFKKKKQADKNK) are enriched in basic and acidic residues. The disordered stretch occupies residues 258-325 (AKKATDDFKK…QFQTRDSKGQ (68 aa)). The segment covering 278 to 312 (ASKPSPGPKPAPKPSPGPKPAPKPSPGPKPSPGPS) has biased composition (pro residues). The tract at residues 407-649 (GGGGGGGNVS…KNVKISKWSP (243 aa)) is catalytic.

Ca(2+) serves as cofactor. It depends on Mg(2+) as a cofactor.

The protein resides in the membrane. The protein localises to the virion. Its activity is regulated as follows. Inhibited by Mn(2+), Cu(2+), Co(2+), Fe(2+), Zn(2+), Ni(2+), EDTA and EGTA. Functionally, during viral entry, involved in the degradation of the host cell wall at the site of attachment. This chain is Exolysin, found in Chlorella (PBCV-1).